Consider the following 458-residue polypeptide: Probable beta-eliminating lyase (458 aa).

Position 257 is an N6-(pyridoxal phosphate)lysine (lysine 257).

The protein belongs to the beta-eliminating lyase family. Pyridoxal 5'-phosphate is required as a cofactor.

This Trichomonas vaginalis (strain ATCC PRA-98 / G3) protein is Probable beta-eliminating lyase.